A 361-amino-acid polypeptide reads, in one-letter code: Glutamate 5-kinase (361 aa).

Lysine 14 is a binding site for ATP. Positions 54, 141, and 153 each coordinate substrate. In terms of domain architecture, PUA spans 277–355 (KGAVIINQGA…KGLKPVIHYD (79 aa)).

It belongs to the glutamate 5-kinase family.

The protein localises to the cytoplasm. It catalyses the reaction L-glutamate + ATP = L-glutamyl 5-phosphate + ADP. It functions in the pathway amino-acid biosynthesis; L-proline biosynthesis; L-glutamate 5-semialdehyde from L-glutamate: step 1/2. In terms of biological role, catalyzes the transfer of a phosphate group to glutamate to form L-glutamate 5-phosphate. The protein is Glutamate 5-kinase of Chlorobaculum tepidum (strain ATCC 49652 / DSM 12025 / NBRC 103806 / TLS) (Chlorobium tepidum).